We begin with the raw amino-acid sequence, 432 residues long: Tyrosine--tRNA ligase (432 aa).

Tyr-35 is a binding site for L-tyrosine. A 'HIGH' region motif is present at residues Pro-40–His-49. 2 residues coordinate L-tyrosine: Tyr-175 and Gln-179. Residues Lys-239–Thr-243 carry the 'KMSKS' region motif. An ATP-binding site is contributed by Lys-242. The S4 RNA-binding domain maps to Pro-365–Gly-422.

It belongs to the class-I aminoacyl-tRNA synthetase family. TyrS type 1 subfamily. In terms of assembly, homodimer.

The protein localises to the cytoplasm. It catalyses the reaction tRNA(Tyr) + L-tyrosine + ATP = L-tyrosyl-tRNA(Tyr) + AMP + diphosphate + H(+). Functionally, catalyzes the attachment of tyrosine to tRNA(Tyr) in a two-step reaction: tyrosine is first activated by ATP to form Tyr-AMP and then transferred to the acceptor end of tRNA(Tyr). The chain is Tyrosine--tRNA ligase from Thermobifida fusca (strain YX).